The chain runs to 477 residues: UDP-N-acetylmuramate--L-alanine ligase (477 aa).

Position 120–126 (120–126 (GSHGKTT)) interacts with ATP.

It belongs to the MurCDEF family.

The protein resides in the cytoplasm. The catalysed reaction is UDP-N-acetyl-alpha-D-muramate + L-alanine + ATP = UDP-N-acetyl-alpha-D-muramoyl-L-alanine + ADP + phosphate + H(+). The protein operates within cell wall biogenesis; peptidoglycan biosynthesis. Cell wall formation. This chain is UDP-N-acetylmuramate--L-alanine ligase, found in Rickettsia canadensis (strain McKiel).